The chain runs to 99 residues: Complement inhibitor RaCI7 (99 aa).

A signal peptide spans 1-24 (MAALNGLVLLLLTISAMFISECYS). Intrachain disulfides connect Cys37-Cys61, Cys42-Cys63, and Cys57-Cys78.

Belongs to the RaCI family. As to expression, expressed in salivary glands.

Its subcellular location is the secreted. In terms of biological role, complement inhibitor. Prevents complement-mediated C5 activation by binding to C5. Binds C5 at a different binding site than the other tick complement inhibitors OmCI and CirpT1, and the drug eculizumab. This Dermacentor andersoni (Rocky mountain wood tick) protein is Complement inhibitor RaCI7.